A 103-amino-acid polypeptide reads, in one-letter code: Large ribosomal subunit protein bL21 (103 aa).

Belongs to the bacterial ribosomal protein bL21 family. In terms of assembly, part of the 50S ribosomal subunit. Contacts protein L20.

This protein binds to 23S rRNA in the presence of protein L20. The protein is Large ribosomal subunit protein bL21 of Heliobacterium modesticaldum (strain ATCC 51547 / Ice1).